A 396-amino-acid polypeptide reads, in one-letter code: Chaperone protein DnaJ 1 (396 aa).

A J domain is found at 10–75 (DYYKVLGVPK…KKRKEYDEAR (66 aa)). A compositionally biased stretch (gly residues) spans 127 to 137 (LFNRGGAGPGT). The disordered stretch occupies residues 127-149 (LFNRGGAGPGTGTRTQPRRGQDI). A CR-type zinc finger spans residues 163–241 (GATVPLRMSS…CKGSGRAKSS (79 aa)). 8 residues coordinate Zn(2+): cysteine 176, cysteine 179, cysteine 192, cysteine 195, cysteine 215, cysteine 218, cysteine 229, and cysteine 232. 4 CXXCXGXG motif repeats span residues 176–183 (CKACSGTG), 192–199 (CPTCVGTG), 215–222 (CPDCKGRG), and 229–236 (CEICKGSG).

It belongs to the DnaJ family. In terms of assembly, homodimer. Zn(2+) is required as a cofactor.

Its subcellular location is the cytoplasm. In terms of biological role, participates actively in the response to hyperosmotic and heat shock by preventing the aggregation of stress-denatured proteins and by disaggregating proteins, also in an autonomous, DnaK-independent fashion. Unfolded proteins bind initially to DnaJ; upon interaction with the DnaJ-bound protein, DnaK hydrolyzes its bound ATP, resulting in the formation of a stable complex. GrpE releases ADP from DnaK; ATP binding to DnaK triggers the release of the substrate protein, thus completing the reaction cycle. Several rounds of ATP-dependent interactions between DnaJ, DnaK and GrpE are required for fully efficient folding. Also involved, together with DnaK and GrpE, in the DNA replication of plasmids through activation of initiation proteins. This chain is Chaperone protein DnaJ 1, found in Streptomyces avermitilis (strain ATCC 31267 / DSM 46492 / JCM 5070 / NBRC 14893 / NCIMB 12804 / NRRL 8165 / MA-4680).